The following is a 401-amino-acid chain: MEKSPDLVLIQATSIRSSNLPLFLIHGDDGDISKYFLLDPLDRNVYGIRNRCCDSAKAWPGGIPEMAKAYLDLIRAVKPRGEILLGGWSLGGLISLEIALVIARNQFSPLNVEGIIMIHTIFPSHQLRIEQVSKRPDSNADSHNGVGPCMIHNQRMIATWRPSPWPIRHIYTGLSDFESESPIVPQEPERISEIRYRQPPPPTILLRARHPASLVARCNNAGYCADTHCHRPMLGWESYREDFIVSIIDIEGNCFSIFDNNYVEGYISTDTLLDLHPICNRIAVVQFDAPVRLYLGLLVITLIDNKNNVMLFHYFTVRVNSDICIISIDLNLPSTGPISQTVNSKLAALASTTQGLNVPVLDLIFPTAAYTQLMSDTGAREMDQRKRQKDFTHTTIHDKNS.

Residues 379–401 (AREMDQRKRQKDFTHTTIHDKNS) are disordered.

It belongs to the AMT4 thioesterase family.

The protein operates within mycotoxin biosynthesis. Its function is as follows. Probable thioesterase; part of the gene cluster that mediates the biosynthesis of gramillins A and B, bicyclic lipopeptides that induce cell death in maize leaves but not in wheat leaves. The nonribosomal peptide synthetase GRA1 incorporates respectively a glutamic adic (Glu), a leucine (Leu), a serine (Ser), a hydroxyglutamine (HOGln), a 2-amino decanoic acid, and 2 cysteins (CysB and CysA). The biosynthesis of 2-amino decanoic acid incorporated in gramillins could be initiated by a fatty acid synthase composed of the alpha and beta subunits FGSG_00036 and FGSG_11656. The cytochrome P450 monooxygenase FGSG_15680 could hydroxylate the fatty acid chain. Subsequent oxidation to the ketone by the oxidoreductase FGSG_00048 and transamination by aminotransferase FGSG_00049 could form 2-amino-decanoic acid. On the other hand, FGSG_15680 could also be responsible for the HO-modified glutamine at the gamma-position. Whether hydroxylation occurs on the fully assembled product or on the Gln residue prior to assembly into the gramillins requires further proof. The thioredoxin FGSG_00043 could also be required for the disulfide-bond formation between CysA and CysB. The specific involvement of the remaining proteins from the cluster is more difficult to discern, but could have broader regulatory (FGSG_00040 and FGSG_11657) or enzymatic functions (FGSG_00044 and FGSG_00045). The final C-domain of GRA1 does not possess the expected sequence of a termination CT domain, often implicated in macrocyclization and release of a cyclopeptidein fungal NRPs; and the thioesterase FGSG_00047 may act in concert with the terminal C-domain of GRA1 to catalyze the formation of the macrocyclic anhydride and release of the products. The chain is Probable thioesterase FGSG_00047 from Gibberella zeae (strain ATCC MYA-4620 / CBS 123657 / FGSC 9075 / NRRL 31084 / PH-1) (Wheat head blight fungus).